The chain runs to 119 residues: UPF0212 protein Mlab_0931 (119 aa).

Belongs to the UPF0212 family.

The protein is UPF0212 protein Mlab_0931 of Methanocorpusculum labreanum (strain ATCC 43576 / DSM 4855 / Z).